The following is a 403-amino-acid chain: Phosphopentomutase (403 aa).

Residues Asp13, Asp298, His303, Asp339, His340, and His351 each coordinate Mn(2+).

Belongs to the phosphopentomutase family. Requires Mn(2+) as cofactor.

The protein resides in the cytoplasm. It catalyses the reaction 2-deoxy-alpha-D-ribose 1-phosphate = 2-deoxy-D-ribose 5-phosphate. The enzyme catalyses alpha-D-ribose 1-phosphate = D-ribose 5-phosphate. It functions in the pathway carbohydrate degradation; 2-deoxy-D-ribose 1-phosphate degradation; D-glyceraldehyde 3-phosphate and acetaldehyde from 2-deoxy-alpha-D-ribose 1-phosphate: step 1/2. Its function is as follows. Isomerase that catalyzes the conversion of deoxy-ribose 1-phosphate (dRib-1-P) and ribose 1-phosphate (Rib-1-P) to deoxy-ribose 5-phosphate (dRib-5-P) and ribose 5-phosphate (Rib-5-P), respectively. The sequence is that of Phosphopentomutase from Streptococcus pneumoniae (strain JJA).